Reading from the N-terminus, the 469-residue chain is Protein DETOXIFICATION 18 (469 aa).

Transmembrane regions (helical) follow at residues 40–60, 73–93, 121–141, 152–172, 183–203, 206–226, 252–274, 293–313, 344–364, 374–394, 406–426, and 438–458; these read LPMI…VMFA, LANS…SGAL, LVFT…FLLL, ALYM…QNIL, PLVL…YALV, AGLG…IAFV, HVVL…YWAF, LVAI…GLSA, VLAL…VGLF, FASL…QGVL, LATV…SVLC, and WIGL…MTIF.

Belongs to the multi antimicrobial extrusion (MATE) (TC 2.A.66.1) family.

Its subcellular location is the membrane. This is Protein DETOXIFICATION 18 from Arabidopsis thaliana (Mouse-ear cress).